A 57-amino-acid polypeptide reads, in one-letter code: Ribulose bisphosphate carboxylase large chain (57 aa).

Positions 1-2 (MS) are excised as a propeptide. Pro3 is modified (N-acetylproline). N6,N6,N6-trimethyllysine is present on Lys14.

This sequence belongs to the RuBisCO large chain family. Type I subfamily. In terms of assembly, heterohexadecamer of 8 large chains and 8 small chains.

Its subcellular location is the plastid. The protein resides in the chloroplast. The enzyme catalyses 2 (2R)-3-phosphoglycerate + 2 H(+) = D-ribulose 1,5-bisphosphate + CO2 + H2O. It catalyses the reaction D-ribulose 1,5-bisphosphate + O2 = 2-phosphoglycolate + (2R)-3-phosphoglycerate + 2 H(+). Its function is as follows. RuBisCO catalyzes two reactions: the carboxylation of D-ribulose 1,5-bisphosphate, the primary event in carbon dioxide fixation, as well as the oxidative fragmentation of the pentose substrate in the photorespiration process. Both reactions occur simultaneously and in competition at the same active site. This chain is Ribulose bisphosphate carboxylase large chain (rbcL), found in Buxus sempervirens (Common box).